The following is a 210-amino-acid chain: Guanylate kinase (210 aa).

A Guanylate kinase-like domain is found at 23 to 203 (GRVVVLSGPS…ACAELVSLLV (181 aa)). An ATP-binding site is contributed by 30–37 (GPSAVGKS).

The protein belongs to the guanylate kinase family.

The protein resides in the cytoplasm. The catalysed reaction is GMP + ATP = GDP + ADP. Its function is as follows. Essential for recycling GMP and indirectly, cGMP. This Mycobacterium leprae (strain TN) protein is Guanylate kinase (gmk).